Consider the following 322-residue polypeptide: Porphobilinogen deaminase (322 aa).

Cysteine 252 is modified (S-(dipyrrolylmethanemethyl)cysteine).

It belongs to the HMBS family. As to quaternary structure, monomer. It depends on dipyrromethane as a cofactor.

The catalysed reaction is 4 porphobilinogen + H2O = hydroxymethylbilane + 4 NH4(+). It participates in porphyrin-containing compound metabolism; protoporphyrin-IX biosynthesis; coproporphyrinogen-III from 5-aminolevulinate: step 2/4. Its function is as follows. Tetrapolymerization of the monopyrrole PBG into the hydroxymethylbilane pre-uroporphyrinogen in several discrete steps. The sequence is that of Porphobilinogen deaminase from Caulobacter vibrioides (strain ATCC 19089 / CIP 103742 / CB 15) (Caulobacter crescentus).